The primary structure comprises 236 residues: 2,3,4,5-tetrahydropyridine-2,6-dicarboxylate N-acetyltransferase (236 aa).

Belongs to the transferase hexapeptide repeat family. DapH subfamily.

The catalysed reaction is (S)-2,3,4,5-tetrahydrodipicolinate + acetyl-CoA + H2O = L-2-acetamido-6-oxoheptanedioate + CoA. It participates in amino-acid biosynthesis; L-lysine biosynthesis via DAP pathway; LL-2,6-diaminopimelate from (S)-tetrahydrodipicolinate (acetylase route): step 1/3. In terms of biological role, catalyzes the transfer of an acetyl group from acetyl-CoA to tetrahydrodipicolinate. The protein is 2,3,4,5-tetrahydropyridine-2,6-dicarboxylate N-acetyltransferase of Bacillus licheniformis (strain ATCC 14580 / DSM 13 / JCM 2505 / CCUG 7422 / NBRC 12200 / NCIMB 9375 / NCTC 10341 / NRRL NRS-1264 / Gibson 46).